We begin with the raw amino-acid sequence, 744 residues long: FHF complex subunit HOOK-interacting protein 2B (744 aa).

Disordered regions lie at residues 184 to 213 (KTAR…LNRD) and 510 to 530 (LDSG…SSDG). Residues 197–213 (AGYRDKDCPHSDALNRD) are compositionally biased toward basic and acidic residues.

Belongs to the FHIP family. In terms of tissue distribution, expressed in colon.

Functionally, able to activate MAPK/ERK and TGFB signaling pathways. May regulate the activity of genes involved in intestinal barrier function and immunoprotective inflammation. May play a role in cell proliferation. This is FHF complex subunit HOOK-interacting protein 2B from Mus musculus (Mouse).